The primary structure comprises 473 residues: Methionine aminopeptidase 2 (473 aa).

Residues 23–121 (LAEDSSNGTQ…KLVSIDQSYP (99 aa)) are disordered. A compositionally biased stretch (polar residues) spans 41–53 (KATTAVGQDNGNN). Over residues 73-83 (DDDDDDEDDDV) the composition is skewed to acidic residues. Residues 84–93 (AAAAAAVGDA) show a composition bias toward low complexity. Positions 97–113 (KKKKKKKSSNKKKKKKL) are enriched in basic residues. His-224 lines the substrate pocket. A divalent metal cation contacts are provided by Asp-244, Asp-255, and His-326. His-334 provides a ligand contact to substrate. Residues Glu-359 and Glu-454 each contribute to the a divalent metal cation site.

Belongs to the peptidase M24A family. Methionine aminopeptidase eukaryotic type 2 subfamily. Co(2+) serves as cofactor. Requires Zn(2+) as cofactor. The cofactor is Mn(2+). Fe(2+) is required as a cofactor.

It is found in the cytoplasm. The enzyme catalyses Release of N-terminal amino acids, preferentially methionine, from peptides and arylamides.. In terms of biological role, cotranslationally removes the N-terminal methionine from nascent proteins. The N-terminal methionine is often cleaved when the second residue in the primary sequence is small and uncharged (Met-Ala-, Cys, Gly, Pro, Ser, Thr, or Val). The polypeptide is Methionine aminopeptidase 2 (Lodderomyces elongisporus (strain ATCC 11503 / CBS 2605 / JCM 1781 / NBRC 1676 / NRRL YB-4239) (Yeast)).